Consider the following 522-residue polypeptide: DEAD-box ATP-dependent RNA helicase 1 (522 aa).

A Q motif motif is present at residues 30-59 (CALDTLPCLNPKLKKALENMGISSLFPVQV). In terms of domain architecture, Helicase ATP-binding spans 66–297 (IGPGGFERDI…QLDLHHPLFM (232 aa)). 79 to 86 (SPTGSGKT) contributes to the ATP binding site. The DEAD box signature appears at 207-210 (DETD). The 151-residue stretch at 325-475 (YLVALLKSWE…PIPPTSLDSI (151 aa)) folds into the Helicase C-terminal domain. A disordered region spans residues 490–522 (VESEAPKKGRQAFRHNSRTGNSQTKLNKPRSEA). Basic residues predominate over residues 497-506 (KGRQAFRHNS).

This sequence belongs to the DEAD box helicase family. DDX51/DBP6 subfamily.

The catalysed reaction is ATP + H2O = ADP + phosphate + H(+). This is DEAD-box ATP-dependent RNA helicase 1 (RH1) from Arabidopsis thaliana (Mouse-ear cress).